The primary structure comprises 282 residues: Succinate dehydrogenase [ubiquinone] iron-sulfur subunit, mitochondrial (282 aa).

Positions 43-131 (YRFNPEAPGA…STKIYPLPHM (89 aa)) constitute a 2Fe-2S ferredoxin-type domain. The [2Fe-2S] cluster site is built by Cys-91, Cys-96, Cys-99, and Cys-111. The 31-residue stretch at 174–204 (ERDRLDGLYECILCACCSTSCPSYWWNADKY) folds into the 4Fe-4S ferredoxin-type domain. Positions 184, 187, and 190 each coordinate [4Fe-4S] cluster. Cys-194 is a binding site for [3Fe-4S] cluster. An a ubiquinone-binding site is contributed by Trp-199. [3Fe-4S] cluster is bound by residues Cys-241 and Cys-247. Cys-251 lines the [4Fe-4S] cluster pocket.

The protein belongs to the succinate dehydrogenase/fumarate reductase iron-sulfur protein family. As to quaternary structure, component of complex II composed of four subunits: a flavoprotein (FP), an iron-sulfur protein (IP), and a cytochrome b composed of a large and a small subunit. [2Fe-2S] cluster serves as cofactor. [3Fe-4S] cluster is required as a cofactor. It depends on [4Fe-4S] cluster as a cofactor.

The protein resides in the mitochondrion inner membrane. The enzyme catalyses a quinone + succinate = fumarate + a quinol. Its pathway is carbohydrate metabolism; tricarboxylic acid cycle; fumarate from succinate (eukaryal route): step 1/1. Functionally, iron-sulfur protein (IP) subunit of succinate dehydrogenase (SDH) that is involved in complex II of the mitochondrial electron transport chain and is responsible for transferring electrons from succinate to ubiquinone (coenzyme Q). The sequence is that of Succinate dehydrogenase [ubiquinone] iron-sulfur subunit, mitochondrial from Caenorhabditis briggsae.